A 406-amino-acid polypeptide reads, in one-letter code: Dual-specificity RNA methyltransferase RlmN (406 aa).

The active-site Proton acceptor is glutamate 119. In terms of domain architecture, Radical SAM core spans 125–370 (DKGRGTLCVS…AMVRRTRGDD (246 aa)). A disulfide bridge links cysteine 132 with cysteine 375. Residues cysteine 139, cysteine 143, and cysteine 146 each contribute to the [4Fe-4S] cluster site. Residues 192-193 (GE), serine 224, 246-248 (SLH), and asparagine 332 each bind S-adenosyl-L-methionine. Cysteine 375 (S-methylcysteine intermediate) is an active-site residue.

The protein belongs to the radical SAM superfamily. RlmN family. It depends on [4Fe-4S] cluster as a cofactor.

It is found in the cytoplasm. It carries out the reaction adenosine(2503) in 23S rRNA + 2 reduced [2Fe-2S]-[ferredoxin] + 2 S-adenosyl-L-methionine = 2-methyladenosine(2503) in 23S rRNA + 5'-deoxyadenosine + L-methionine + 2 oxidized [2Fe-2S]-[ferredoxin] + S-adenosyl-L-homocysteine. The catalysed reaction is adenosine(37) in tRNA + 2 reduced [2Fe-2S]-[ferredoxin] + 2 S-adenosyl-L-methionine = 2-methyladenosine(37) in tRNA + 5'-deoxyadenosine + L-methionine + 2 oxidized [2Fe-2S]-[ferredoxin] + S-adenosyl-L-homocysteine. Its function is as follows. Specifically methylates position 2 of adenine 2503 in 23S rRNA and position 2 of adenine 37 in tRNAs. m2A2503 modification seems to play a crucial role in the proofreading step occurring at the peptidyl transferase center and thus would serve to optimize ribosomal fidelity. This Xylella fastidiosa (strain M12) protein is Dual-specificity RNA methyltransferase RlmN.